The sequence spans 70 residues: Small integral membrane protein 42 (70 aa).

The helical transmembrane segment at 26-46 (LVNVLFFFTPLMTLVTLLILV) threads the bilayer.

The protein resides in the membrane. This chain is Small integral membrane protein 42, found in Homo sapiens (Human).